Consider the following 1099-residue polypeptide: Carbamoyl phosphate synthase large chain (1099 aa).

Residues 1–402 (MPKRTDLKSV…ALQKALRSLE (402 aa)) form a carboxyphosphate synthetic domain region. Positions 129, 169, 175, 176, 208, 210, 215, 241, 242, 243, 285, and 299 each coordinate ATP. The ATP-grasp 1 domain occupies 133-328 (KGVVERCGAE…IAKIATKLSL (196 aa)). Mg(2+)-binding residues include Q285, E299, and N301. Q285, E299, and N301 together coordinate Mn(2+). Positions 403 to 546 (QKGSQLDFSH…YHYSSYDEED (144 aa)) are oligomerization domain. The segment at 547-950 (EVALHSKPSI…AFAKSQAAAN (404 aa)) is carbamoyl phosphate synthetic domain. The region spanning 677-868 (SRVLDEAGLI…MAKAAALIGT (192 aa)) is the ATP-grasp 2 domain. 10 residues coordinate ATP: R713, R752, L754, E759, G784, I785, H786, S787, Q827, and E839. Mg(2+) contacts are provided by Q827, E839, and N841. Q827, E839, and N841 together coordinate Mn(2+). The region spanning 951–1099 (NALPTEGKIF…AENLKALQNG (149 aa)) is the MGS-like domain. The allosteric domain stretch occupies residues 951–1099 (NALPTEGKIF…AENLKALQNG (149 aa)).

This sequence belongs to the CarB family. Composed of two chains; the small (or glutamine) chain promotes the hydrolysis of glutamine to ammonia, which is used by the large (or ammonia) chain to synthesize carbamoyl phosphate. Tetramer of heterodimers (alpha,beta)4. Requires Mg(2+) as cofactor. Mn(2+) serves as cofactor.

The catalysed reaction is hydrogencarbonate + L-glutamine + 2 ATP + H2O = carbamoyl phosphate + L-glutamate + 2 ADP + phosphate + 2 H(+). The enzyme catalyses hydrogencarbonate + NH4(+) + 2 ATP = carbamoyl phosphate + 2 ADP + phosphate + 2 H(+). The protein operates within amino-acid biosynthesis; L-arginine biosynthesis; carbamoyl phosphate from bicarbonate: step 1/1. It functions in the pathway pyrimidine metabolism; UMP biosynthesis via de novo pathway; (S)-dihydroorotate from bicarbonate: step 1/3. Large subunit of the glutamine-dependent carbamoyl phosphate synthetase (CPSase). CPSase catalyzes the formation of carbamoyl phosphate from the ammonia moiety of glutamine, carbonate, and phosphate donated by ATP, constituting the first step of 2 biosynthetic pathways, one leading to arginine and/or urea and the other to pyrimidine nucleotides. The large subunit (synthetase) binds the substrates ammonia (free or transferred from glutamine from the small subunit), hydrogencarbonate and ATP and carries out an ATP-coupled ligase reaction, activating hydrogencarbonate by forming carboxy phosphate which reacts with ammonia to form carbamoyl phosphate. The chain is Carbamoyl phosphate synthase large chain from Arthrobacter sp. (strain FB24).